Consider the following 1197-residue polypeptide: Sensor protein EvgS (1197 aa).

An N-terminal signal peptide occupies residues 1-21 (MKFLPYIFLLCCGLWSTISFA). The Cytoplasmic portion of the chain corresponds to 22–325 (DEDYIEYRGI…SMTDENGSVR (304 aa)). The chain crosses the membrane as a helical span at residues 326 to 346 (GVMGDILNIITLQTGLNFSPI). Over 347–537 (TVSHNIHAGT…TWDLYSEQFY (191 aa)) the chain is Periplasmic. Residues 538-558 (IVTTLSVLLVGSSLLWGFYLL) traverse the membrane as a helical segment. Residues 559 to 1197 (RSVRRRKVIQ…EIAVFCQKND (639 aa)) lie on the Cytoplasmic side of the membrane. The Histidine kinase domain occupies 718–938 (TMSHEIRTPI…TFTITIPVEI (221 aa)). His-721 bears the Phosphohistidine; by autocatalysis mark. The 115-residue stretch at 960-1074 (SILIADDHPT…VLKTHLSQLH (115 aa)) folds into the Response regulatory domain. Asp-1009 carries the 4-aspartylphosphate modification. An HPt domain is found at 1098–1197 (DLQLMQEILM…EIAVFCQKND (100 aa)). Residue His-1137 is modified to Phosphohistidine.

Activation requires a sequential transfer of a phosphate group from a His in the primary transmitter domain, to an Asp in the receiver domain and to a His in the secondary transmitter domain.

It localises to the cell inner membrane. The enzyme catalyses ATP + protein L-histidine = ADP + protein N-phospho-L-histidine.. Its function is as follows. Member of the two-component regulatory system EvgS/EvgA. Phosphorylates EvgA via a four-step phosphorelay in response to environmental signals. The chain is Sensor protein EvgS (evgS) from Escherichia coli (strain K12).